The chain runs to 421 residues: Esterase LipQ (421 aa).

Residues serine 249, aspartate 344, and histidine 377 contribute to the active site.

The protein belongs to the 'GDXG' lipolytic enzyme family.

It carries out the reaction hexadecanoate ester + H2O = an aliphatic alcohol + hexadecanoate + H(+). Its function is as follows. Shows lipase activity. Is highly immunogenic and may play an important role in the virulence and pathogenesis of M.tuberculosis infection, by altering the balance of cytokines. Significantly down-regulates the expression level of pro-inflammatory cytokines (TNF-alpha and IFN-gamma) and up-regulates the level of anti-inflammatory cytokines such as IL-4 and IL-10 as compared to LPS stimulated macrophages. Also inhibits the expression of iNOS, TLR2 and transcription factor NF-kappa-B in LPS stimulated macrophages whereas the expression of TLR-4 remains unchanged. This Mycobacterium tuberculosis (strain ATCC 25618 / H37Rv) protein is Esterase LipQ.